The following is a 670-amino-acid chain: Lebercilin-like protein (670 aa).

The disordered stretch occupies residues lysine 30–tyrosine 51. Residues phenylalanine 38–tyrosine 51 are compositionally biased toward polar residues. 2 coiled-coil regions span residues leucine 148–glutamate 259 and alanine 305–isoleucine 336. The segment at histidine 374–threonine 393 is disordered. Residues glutamate 420–isoleucine 440 are a coiled coil. Disordered stretches follow at residues arginine 495 to glycine 516, lysine 557 to lysine 580, and leucine 609 to isoleucine 670. Basic and acidic residues-rich tracts occupy residues serine 560–serine 572 and glycine 621–histidine 632. Polar residues predominate over residues threonine 651–threonine 662.

It belongs to the LCA5 family.

In Homo sapiens (Human), this protein is Lebercilin-like protein (LCA5L).